Reading from the N-terminus, the 362-residue chain is UDP-N-acetylglucosamine--N-acetylmuramyl-(pentapeptide) pyrophosphoryl-undecaprenol N-acetylglucosamine transferase (362 aa).

UDP-N-acetyl-alpha-D-glucosamine-binding positions include 14-16 (TGG), arginine 170, serine 199, and glutamine 289.

It belongs to the glycosyltransferase 28 family. MurG subfamily.

The protein resides in the cell inner membrane. It catalyses the reaction di-trans,octa-cis-undecaprenyl diphospho-N-acetyl-alpha-D-muramoyl-L-alanyl-D-glutamyl-meso-2,6-diaminopimeloyl-D-alanyl-D-alanine + UDP-N-acetyl-alpha-D-glucosamine = di-trans,octa-cis-undecaprenyl diphospho-[N-acetyl-alpha-D-glucosaminyl-(1-&gt;4)]-N-acetyl-alpha-D-muramoyl-L-alanyl-D-glutamyl-meso-2,6-diaminopimeloyl-D-alanyl-D-alanine + UDP + H(+). The protein operates within cell wall biogenesis; peptidoglycan biosynthesis. Cell wall formation. Catalyzes the transfer of a GlcNAc subunit on undecaprenyl-pyrophosphoryl-MurNAc-pentapeptide (lipid intermediate I) to form undecaprenyl-pyrophosphoryl-MurNAc-(pentapeptide)GlcNAc (lipid intermediate II). This Borrelia turicatae (strain 91E135) protein is UDP-N-acetylglucosamine--N-acetylmuramyl-(pentapeptide) pyrophosphoryl-undecaprenol N-acetylglucosamine transferase.